The primary structure comprises 399 residues: Argininosuccinate synthase (399 aa).

Position 9-17 (9-17 (AYSGGLDTS)) interacts with ATP. Tyrosine 85 contacts L-citrulline. Glycine 115 serves as a coordination point for ATP. Positions 117, 121, and 122 each coordinate L-aspartate. Asparagine 121 is an L-citrulline binding site. Positions 125, 173, 258, and 270 each coordinate L-citrulline.

This sequence belongs to the argininosuccinate synthase family. Type 1 subfamily. In terms of assembly, homotetramer.

Its subcellular location is the cytoplasm. It carries out the reaction L-citrulline + L-aspartate + ATP = 2-(N(omega)-L-arginino)succinate + AMP + diphosphate + H(+). It functions in the pathway amino-acid biosynthesis; L-arginine biosynthesis; L-arginine from L-ornithine and carbamoyl phosphate: step 2/3. In Streptococcus uberis (strain ATCC BAA-854 / 0140J), this protein is Argininosuccinate synthase.